The chain runs to 304 residues: Non-specific ribonucleoside hydrolase RihC (304 aa).

Histidine 233 is a catalytic residue.

It belongs to the IUNH family. RihC subfamily.

In terms of biological role, hydrolyzes both purine and pyrimidine ribonucleosides with a broad-substrate specificity. In Klebsiella pneumoniae (strain 342), this protein is Non-specific ribonucleoside hydrolase RihC.